The following is a 145-amino-acid chain: Bacilliredoxin SERP1006 (145 aa).

This sequence belongs to the bacilliredoxin family.

The sequence is that of Bacilliredoxin SERP1006 from Staphylococcus epidermidis (strain ATCC 35984 / DSM 28319 / BCRC 17069 / CCUG 31568 / BM 3577 / RP62A).